Consider the following 156-residue polypeptide: Xanthocillin biosynthesis cluster protein D (156 aa).

N-linked (GlcNAc...) asparagine glycosylation is found at N107 and N120. Residues 131–153 (IHLNAIALVATVWYGFTLSSSLL) form a helical membrane-spanning segment.

It localises to the membrane. It functions in the pathway secondary metabolite biosynthesis. Part of the gene cluster that mediates the biosynthesis of the isocyanide xanthocillin and its derivatives. The first step of the pathway consists in the conversion of tyrosine into a vinyl-isonitrile intermediate by the isocyanide synthase xanB. Subsequent oxidative dimerization of this intermediate to form xanthocillin may involve the cytochrome P450 monooxygenase xanG, whose expression is coregulated with that of XanB. Xanthocillin can be further modified by the isonitrile hydratase-like protein xanA which introduces N-formyl groups and the methyltransferase xanE which introduces methyl groups, leading to the production of several derivatives including fumiformamide. Finally, fumiformamide can be subject to both oxidative and reductive cyclization to yield melanocins E and F, respectively. This chain is Xanthocillin biosynthesis cluster protein D, found in Aspergillus fumigatus (strain ATCC MYA-4609 / CBS 101355 / FGSC A1100 / Af293) (Neosartorya fumigata).